Reading from the N-terminus, the 324-residue chain is NADH-ubiquinone oxidoreductase chain 1 (324 aa).

9 consecutive transmembrane segments (helical) span residues 9–29 (IINP…LTLL), 43–63 (PNIV…KLFI), 75–95 (FLFL…WAPM), 106–126 (LGVL…LGSG), 146–166 (ISYE…TGGF), 177–197 (SIWL…STLA), 237–257 (ILLM…IPAF), 259–279 (ELTA…FLWV), and 299–319 (FLPL…AMAG).

This sequence belongs to the complex I subunit 1 family.

The protein resides in the mitochondrion inner membrane. The enzyme catalyses a ubiquinone + NADH + 5 H(+)(in) = a ubiquinol + NAD(+) + 4 H(+)(out). Its function is as follows. Core subunit of the mitochondrial membrane respiratory chain NADH dehydrogenase (Complex I) that is believed to belong to the minimal assembly required for catalysis. Complex I functions in the transfer of electrons from NADH to the respiratory chain. The immediate electron acceptor for the enzyme is believed to be ubiquinone. The protein is NADH-ubiquinone oxidoreductase chain 1 (MT-ND1) of Salmo salar (Atlantic salmon).